A 336-amino-acid chain; its full sequence is Eukaryotic translation initiation factor 3 subunit I (336 aa).

WD repeat units lie at residues 8-47 (GHER…RLGT), 50-91 (GHLG…KVWE), 146-185 (CNES…QLEN), 190-229 (EFDH…ILKT), and 287-326 (GHFG…FDFM).

The protein belongs to the eIF-3 subunit I family. As to quaternary structure, component of the eukaryotic translation initiation factor 3 (eIF-3) complex.

The protein resides in the cytoplasm. In terms of biological role, component of the eukaryotic translation initiation factor 3 (eIF-3) complex, which is involved in protein synthesis of a specialized repertoire of mRNAs and, together with other initiation factors, stimulates binding of mRNA and methionyl-tRNAi to the 40S ribosome. The eIF-3 complex specifically targets and initiates translation of a subset of mRNAs involved in cell proliferation. This chain is Eukaryotic translation initiation factor 3 subunit I (tif34), found in Aspergillus terreus (strain NIH 2624 / FGSC A1156).